Reading from the N-terminus, the 952-residue chain is Probable RNA-binding protein 19 (952 aa).

Residues 2–79 (SRLIVKNLPN…TRITVEFCKS (78 aa)) enclose the RRM 1 domain. 3 disordered regions span residues 85–126 (KPRA…LEKL), 159–267 (KAKT…RGAV), and 367–395 (KQAPTARGPPKSTTPWQGRTLGENEEEED). Low complexity predominate over residues 95-109 (KSSQPKQPSQDSVPS). Residues 163–180 (KASSDYLNFDSDSNSDSG) are compositionally biased toward polar residues. A phosphoserine mark is found at Ser177, Ser179, and Ser183. Acidic residues-rich tracts occupy residues 181 to 196 (QESEEEPAREDPEEEQ) and 224 to 251 (SSEDEDEEDSEDEAVNCEEGSEEEEEEG). 2 consecutive RRM domains span residues 293-368 (YTVK…REKQ) and 400-478 (GRLF…PSTI). Residue Lys479 forms a Glycyl lysine isopeptide (Lys-Gly) (interchain with G-Cter in SUMO2) linkage. Positions 481–504 (EASQEANAPGSSYKKKKEAMDKAN) are disordered. Residues 584–656 (TVILAKNLPA…VPLYLEWAPI (73 aa)) enclose the RRM 4 domain. Basic and acidic residues predominate over residues 664–679 (QKKDSQHEQPAEKAEV). Positions 664–719 (QKKDSQHEQPAEKAEVEQETVLDPEGEKASVEGAEASTGKMEEEEEEEEEEEEESI) are disordered. Ser693 carries the phosphoserine modification. The segment covering 705–718 (EEEEEEEEEEEEES) has biased composition (acidic residues). 2 consecutive RRM domains span residues 722–803 (CTLF…ISER) and 824–904 (SKIL…WADS). Ser928 and Ser944 each carry phosphoserine.

The protein belongs to the RRM MRD1 family. As to expression, expressed in the crypts of Lieberkuhn of the intestine (at protein level).

The protein resides in the nucleus. It localises to the nucleolus. It is found in the nucleoplasm. Its subcellular location is the cytoplasm. The protein localises to the chromosome. Its function is as follows. Plays a role in embryo pre-implantation development. The sequence is that of Probable RNA-binding protein 19 (Rbm19) from Mus musculus (Mouse).